The sequence spans 364 residues: UDP-3-O-acylglucosamine N-acyltransferase (364 aa).

H267 acts as the Proton acceptor in catalysis.

It belongs to the transferase hexapeptide repeat family. LpxD subfamily. In terms of assembly, homotrimer.

The catalysed reaction is a UDP-3-O-[(3R)-3-hydroxyacyl]-alpha-D-glucosamine + a (3R)-hydroxyacyl-[ACP] = a UDP-2-N,3-O-bis[(3R)-3-hydroxyacyl]-alpha-D-glucosamine + holo-[ACP] + H(+). It participates in bacterial outer membrane biogenesis; LPS lipid A biosynthesis. In terms of biological role, catalyzes the N-acylation of UDP-3-O-acylglucosamine using 3-hydroxyacyl-ACP as the acyl donor. Is involved in the biosynthesis of lipid A, a phosphorylated glycolipid that anchors the lipopolysaccharide to the outer membrane of the cell. This chain is UDP-3-O-acylglucosamine N-acyltransferase, found in Bordetella petrii (strain ATCC BAA-461 / DSM 12804 / CCUG 43448).